The chain runs to 308 residues: Ornithine carbamoyltransferase (308 aa).

Residues 56–59, glutamine 83, arginine 107, and 134–137 contribute to the carbamoyl phosphate site; these read STRT and HPCQ. Residues asparagine 165, aspartate 225, and 229–230 each bind L-ornithine; that span reads SM. Carbamoyl phosphate-binding positions include 266 to 267 and arginine 294; that span reads CL.

It belongs to the aspartate/ornithine carbamoyltransferase superfamily. OTCase family.

The protein localises to the cytoplasm. It carries out the reaction carbamoyl phosphate + L-ornithine = L-citrulline + phosphate + H(+). Its pathway is amino-acid biosynthesis; L-arginine biosynthesis; L-arginine from L-ornithine and carbamoyl phosphate: step 1/3. In terms of biological role, reversibly catalyzes the transfer of the carbamoyl group from carbamoyl phosphate (CP) to the N(epsilon) atom of ornithine (ORN) to produce L-citrulline. The protein is Ornithine carbamoyltransferase of Roseobacter denitrificans (strain ATCC 33942 / OCh 114) (Erythrobacter sp. (strain OCh 114)).